We begin with the raw amino-acid sequence, 150 residues long: Large ribosomal subunit protein uL15 (150 aa).

The segment covering 1–15 (MNLSNLQPAEGSTHN) has biased composition (polar residues). Residues 1-53 (MNLSNLQPAEGSTHNQNKRVGRGEGSGKGGTAARGHKGAKSRSGYSKKIGFEG) are disordered. Over residues 23–32 (GEGSGKGGTA) the composition is skewed to gly residues.

This sequence belongs to the universal ribosomal protein uL15 family. Part of the 50S ribosomal subunit.

Functionally, binds to the 23S rRNA. The sequence is that of Large ribosomal subunit protein uL15 from Flavobacterium johnsoniae (strain ATCC 17061 / DSM 2064 / JCM 8514 / BCRC 14874 / CCUG 350202 / NBRC 14942 / NCIMB 11054 / UW101) (Cytophaga johnsonae).